We begin with the raw amino-acid sequence, 1162 residues long: MELNAYIGRAGTGKSHHMIDNIKQQMKEDPLGDPIVLIAPTQSTFQLEQAFVNDKELNGSLRTEVLHFERLSYRVFQEVGGLTEERLTQAATEMMIYDLVQQHKSELKLYQSQVNYYGFSEKLSEQIQDFKKYSVTPEHLHTFLQDNDLKTRTRHKLEDISLIYQYFEERINGEFITSEDSLNHFIDILSQSEWIKRAEVYIDGFHNFSTLEYQIIKALVQSAKKVTVLLTTDGNEDPFSLFRKPSEVLTHLKEIAKDLNIELQQQFFKQQYRFNNKDLIQLEQQFDALQINPIAYDGSINILESSSIREEVNEVARQIIKDTRDKQYRYQDIAILYRDEAYAYLFDSVLPQYDIPFNIDTKRSMTHHPIMEMVRSLLEVIQTNWNISPMMRLIKTNILTNHFKDSAYLIDLLENFVVERGVYGKRWLDEKLFSIDNFTKMGRKEHKLTTEEREDFEQVVHLKNDIIDKILTFEKAMNEAENVRGFATAFYETMEAFDLPKYLMTHRDQLDVDGRHEEAEEIDQIWNGLIQILDDLVTVFDNEEMTLKRFLEVFDIGLEQLEFVMIPQTLDQVSIGTMDLAKVDNKKHIYMVGMNDGAMPQPVSSSSLITDEEKKVFEQQAQVELSPTSDILQMDEAFVCYIAMTRGSEQVTFSYSLMGAQGEDKEKSPFIDQIQGLFNGLEVMNIHYQHNAQPLSLMEHPHQTKVVLFESLKAWLEAEMVADVWVDAYQVMRDNDKLNNGLEYLLTALTYDNETVKLDEPLAASLYGSTINASVSRFEGYNDCPFKHYANHGLRLNERTKYKLENFDLGNIFHTALKYISDKVDGDFKNLDNKKIHALTVEALENVLPQVQFNLMDSNAYYRYVSKRIGVIVESTLKALRYQNKNTKFKPQRFEAGFRKTPNNSEELIAQPLITKQGIPVNIRGQIDRIDAYTKDDKSYINIIDYKSSNPSAKLDLKKVYYGKQMQMMTYMDIALQNAQRLGLSNEIKPGGLLYFHVHDERLSFKDWGELEDDALTQDKLEQAFLKEYKLRGLVNSDMDVVDALDIRLEEIGKSDIVPVSLKKDGSIGSRGSSVADETTIHKFIKHNKDNFIKTATNIMEGHTEVAPLKFDDQLPCQFCNFQSVCHVDTIIDSKHYRHVEETIDPIKAIQDVELESGDHNE.

The region spanning 1-275 (MELNAYIGRA…QFFKQQYRFN (275 aa)) is the UvrD-like helicase ATP-binding domain. ATP is bound at residue 8–15 (GRAGTGKS). Residues 269-583 (KQQYRFNNKD…SIGTMDLAKV (315 aa)) enclose the UvrD-like helicase C-terminal domain. [4Fe-4S] cluster is bound by residues C784, C1117, C1120, and C1126.

The protein belongs to the helicase family. AddB/RexB type 1 subfamily. As to quaternary structure, heterodimer of AddA and AddB. Mg(2+) is required as a cofactor. It depends on [4Fe-4S] cluster as a cofactor.

Functionally, the heterodimer acts as both an ATP-dependent DNA helicase and an ATP-dependent, dual-direction single-stranded exonuclease. Recognizes the chi site generating a DNA molecule suitable for the initiation of homologous recombination. The AddB subunit has 5' -&gt; 3' nuclease activity but not helicase activity. This is ATP-dependent helicase/deoxyribonuclease subunit B from Staphylococcus haemolyticus (strain JCSC1435).